Reading from the N-terminus, the 497-residue chain is L-carnitine dehydrogenase/betainyl-CoA thioesterase (497 aa).

An L-carnitine dehydrogenase region spans residues 1–335; that stretch reads MSFITKAACV…AKLWANARKP (335 aa). 11–16 serves as a coordination point for NAD(+); sequence GGGVIG. The important for dehydrogenase activity stretch occupies residues 330–335; it reads ANARKP. A betainyl-CoA thioesterase region spans residues 336–497; the sequence is EADLGDVKPL…AGRFVGQKRA (162 aa).

The protein in the N-terminal section; belongs to the 3-hydroxyacyl-CoA dehydrogenase family. L-carnitine dehydrogenase subfamily. It in the C-terminal section; belongs to the betainyl-CoA thioesterase family. As to quaternary structure, homodimer.

The protein localises to the cytoplasm. The enzyme catalyses carnitine + NAD(+) = 3-dehydrocarnitine + NADH + H(+). It catalyses the reaction N,N,N-trimethylglycyl-CoA + H2O = glycine betaine + CoA + H(+). Its pathway is amine and polyamine metabolism; carnitine metabolism. Functionally, catalyzes the NAD(+)-dependent oxidation of L-carnitine to 3-dehydrocarnitine. Probably also catalyzes the cleavage of betainyl-CoA (N,N,N-trimethylglycyl-CoA) into glycine betaine and coenzyme A. Despite a high similarity to 3-hydroxyacyl-CoA dehydrogenases, cannot dehydrogenate 3-hydroxybutylate and 3-hydroxybutyl-CoA. Is probably involved in a L-carnitine degradation pathway that allows Rhizobium sp. YS-240 to grow on L-carnitine as the sole source of carbon and nitrogen. In Rhizobium sp, this protein is L-carnitine dehydrogenase/betainyl-CoA thioesterase.